A 566-amino-acid chain; its full sequence is Urease subunit alpha (566 aa).

In terms of domain architecture, Urease spans 128-566 (GGIDSHVHFI…LPMAQRYFLF (439 aa)). Positions 133, 135, and 216 each coordinate Ni(2+). An N6-carboxylysine modification is found at Lys-216. His-218 is a substrate binding site. Positions 245 and 271 each coordinate Ni(2+). The Proton donor role is filled by His-319. Position 359 (Asp-359) interacts with Ni(2+).

Belongs to the metallo-dependent hydrolases superfamily. Urease alpha subunit family. In terms of assembly, heterotrimer of UreA (gamma), UreB (beta) and UreC (alpha) subunits. Three heterotrimers associate to form the active enzyme. Requires Ni cation as cofactor. In terms of processing, carboxylation allows a single lysine to coordinate two nickel ions.

It localises to the cytoplasm. It carries out the reaction urea + 2 H2O + H(+) = hydrogencarbonate + 2 NH4(+). It participates in nitrogen metabolism; urea degradation; CO(2) and NH(3) from urea (urease route): step 1/1. This is Urease subunit alpha from Nitrosococcus oceani (strain ATCC 19707 / BCRC 17464 / JCM 30415 / NCIMB 11848 / C-107).